The chain runs to 239 residues: Ribonuclease 3 (239 aa).

An RNase III domain is found at 18–141 (YTTLEKALGY…LMAGVYLEAG (124 aa)). Residue E54 coordinates Mg(2+). Residue D58 is part of the active site. Residues S127 and E130 each contribute to the Mg(2+) site. The active site involves E130. A DRBM domain is found at 168–237 (DYKTALQELT…AYQALQKLKE (70 aa)).

This sequence belongs to the ribonuclease III family. Homodimer. It depends on Mg(2+) as a cofactor.

The protein localises to the cytoplasm. It carries out the reaction Endonucleolytic cleavage to 5'-phosphomonoester.. Its function is as follows. Digests double-stranded RNA. Involved in the processing of primary rRNA transcript to yield the immediate precursors to the large and small rRNAs (23S and 16S). Processes some mRNAs, and tRNAs when they are encoded in the rRNA operon. Processes pre-crRNA and tracrRNA of type II CRISPR loci if present in the organism. The chain is Ribonuclease 3 from Helicobacter pylori (strain ATCC 700392 / 26695) (Campylobacter pylori).